Consider the following 114-residue polypeptide: Probable 4-amino-4-deoxy-L-arabinose-phosphoundecaprenol flippase subunit ArnE (114 aa).

Helical transmembrane passes span 38 to 58, 64 to 84, and 94 to 114; these read LTLR…LLWL, LPLS…TLAA, and LRHW…SWHL. Residues 43-112 form the EamA domain; that stretch reads LAIAVVSLGL…IMFGILLMSW (70 aa).

It belongs to the ArnE family. As to quaternary structure, heterodimer of ArnE and ArnF.

The protein localises to the cell inner membrane. It participates in bacterial outer membrane biogenesis; lipopolysaccharide biosynthesis. In terms of biological role, translocates 4-amino-4-deoxy-L-arabinose-phosphoundecaprenol (alpha-L-Ara4N-phosphoundecaprenol) from the cytoplasmic to the periplasmic side of the inner membrane. The sequence is that of Probable 4-amino-4-deoxy-L-arabinose-phosphoundecaprenol flippase subunit ArnE from Yersinia pseudotuberculosis serotype O:3 (strain YPIII).